The primary structure comprises 514 residues: Prolyl 3,4-dihydroxylase OGFOD1 (514 aa).

Residues 114-221 (GAVDCSCNIY…RVSISGWFHT (108 aa)) enclose the Fe2OG dioxygenase domain. His132 and Asp134 together coordinate Fe cation. 2-oxoglutarate is bound at residue Tyr146. Fe cation is bound at residue His200. Arg212 lines the 2-oxoglutarate pocket.

Belongs to the TPA1 family. In terms of assembly, monomer and homodimer. Fe(2+) serves as cofactor. It depends on L-ascorbate as a cofactor.

The enzyme catalyses [ribosomal protein uS12]-L-proline + 2-oxoglutarate + O2 = [ribosomal protein uS12]-(3S)-3-hydroxy-L-proline + succinate + CO2. The catalysed reaction is [ribosomal protein uS12]-(3S)-3-hydroxy-L-proline + 2-oxoglutarate + O2 = [ribosomal protein uS12]-(3S)-3,4-dihydroxy-L-proline + succinate + CO2. In terms of biological role, prolyl 3,4-dihydroxylase that catalyzes 3,4-dihydroxylation of 'Pro-61' of small ribosomal subunit uS12 (RPS23), thereby regulating protein translation termination efficiency. The sequence is that of Prolyl 3,4-dihydroxylase OGFOD1 (Ogd) from Ostreococcus tauri.